A 427-amino-acid polypeptide reads, in one-letter code: Adenylosuccinate synthetase (427 aa).

GTP is bound by residues 12 to 18 and 40 to 42; these read GDEGKGK and GHT. Aspartate 13 serves as the catalytic Proton acceptor. Mg(2+)-binding residues include aspartate 13 and glycine 40. IMP contacts are provided by residues 13-16, 38-41, threonine 128, arginine 142, glutamine 223, threonine 238, and arginine 302; these read DEGK and NAGH. Histidine 41 functions as the Proton donor in the catalytic mechanism. Residue 298–304 participates in substrate binding; it reads TTTGRPR. GTP is bound by residues arginine 304, 330-332, and 412-414; these read SID and SVG.

Belongs to the adenylosuccinate synthetase family. Homodimer. Mg(2+) serves as cofactor.

The protein localises to the cytoplasm. It catalyses the reaction IMP + L-aspartate + GTP = N(6)-(1,2-dicarboxyethyl)-AMP + GDP + phosphate + 2 H(+). The protein operates within purine metabolism; AMP biosynthesis via de novo pathway; AMP from IMP: step 1/2. Its function is as follows. Plays an important role in the de novo pathway of purine nucleotide biosynthesis. Catalyzes the first committed step in the biosynthesis of AMP from IMP. The chain is Adenylosuccinate synthetase from Staphylococcus aureus (strain MW2).